A 296-amino-acid polypeptide reads, in one-letter code: uncharacterized protein (296 aa).

Disordered regions lie at residues 1 to 45 and 200 to 296; these read MSAT…LGEN and EQVV…SESE. The segment covering 201–220 has biased composition (acidic residues); it reads QVVDDYPADSDDDTDAESDD. A compositionally biased stretch (polar residues) spans 236–249; it reads SSVSSCGSFITDGS. The segment covering 250–296 has biased composition (acidic residues); the sequence is GSEESEDSASDETDDSDFDTDELTSESEEEESESESESESESESESE.

This is an uncharacterized protein from Ictaluridae (bullhead catfishes).